The following is a 332-amino-acid chain: Glycerol-3-phosphate dehydrogenase [NAD(P)+] (332 aa).

4 residues coordinate NADPH: Ser14, Trp15, Arg35, and Lys107. The sn-glycerol 3-phosphate site is built by Lys107, Gly137, and Ser139. Position 141 (Ala141) interacts with NADPH. Sn-glycerol 3-phosphate is bound by residues Lys192, Asp245, Ser255, Arg256, and Asn257. The active-site Proton acceptor is the Lys192. Arg256 contacts NADPH. The NADPH site is built by Val280 and Glu282.

This sequence belongs to the NAD-dependent glycerol-3-phosphate dehydrogenase family.

The protein localises to the cytoplasm. It carries out the reaction sn-glycerol 3-phosphate + NAD(+) = dihydroxyacetone phosphate + NADH + H(+). The catalysed reaction is sn-glycerol 3-phosphate + NADP(+) = dihydroxyacetone phosphate + NADPH + H(+). It participates in membrane lipid metabolism; glycerophospholipid metabolism. Its function is as follows. Catalyzes the reduction of the glycolytic intermediate dihydroxyacetone phosphate (DHAP) to sn-glycerol 3-phosphate (G3P), the key precursor for phospholipid synthesis. The sequence is that of Glycerol-3-phosphate dehydrogenase [NAD(P)+] from Desulfovibrio desulfuricans (strain ATCC 27774 / DSM 6949 / MB).